An 836-amino-acid polypeptide reads, in one-letter code: Protein O-mannosyl-transferase TMTC2 (836 aa).

Residues 1-21 (MIAELVSSALGLALYLNTLSA) form a helical membrane-spanning segment. The Extracellular segment spans residues 22 to 84 (DFCYDDSRAI…LNHAIGGLNP (63 aa)). Residues 85–105 (WSYHLVNVLLHAAVTGLFTSF) traverse the membrane as a helical segment. Topologically, residues 106–107 (SK) are cytoplasmic. A helical membrane pass occupies residues 108 to 128 (ILLGDGYWTFMAGLMFASHPI). The Extracellular segment spans residues 129–132 (HTEA). The helical transmembrane segment at 133 to 153 (VAGIVGRADVGASLFFLLSLL) threads the bilayer. Over 154 to 162 (CYIKHCSTR) the chain is Cytoplasmic. Transmembrane regions (helical) follow at residues 163–184 (GYSA…CSML) and 185–204 (WKEQ…VFVF). The Cytoplasmic segment spans residues 205 to 220 (HRLKIKQILPTIYKRK). Residues 221–241 (NLSLFLSISLLIFWGSSLLGA) form a helical membrane-spanning segment. At 242-312 (RLYWMGNKPP…KTVCDWRNLH (71 aa)) the chain is on the extracellular side. The helical transmembrane segment at 313-333 (TVAFYTGLLLLAYYGLKSPSV) threads the bilayer. Residues 334-399 (DRECNGKTVT…TENIVVLSLS (66 aa)) are Cytoplasmic-facing. The helical transmembrane segment at 400–420 (LLIIPFVPATNLFFYVGFVIA) threads the bilayer. Over 421–422 (ER) the chain is Extracellular. The chain crosses the membrane as a helical span at residues 423 to 443 (VLYIPSMGFCLLITVGARALY). At 444–449 (VKVQKR) the chain is on the cytoplasmic side. Residues 450 to 470 (FLKSLIFYATATLIVFYGLKT) traverse the membrane as a helical segment. Topologically, residues 471-836 (AIRNGDWQNE…EKQGLKTSKT (366 aa)) are extracellular. TPR repeat units lie at residues 493–526 (AKAW…RSNM), 527–560 (ADML…RPTL), 561–594 (ASAY…PDEN), 606–639 (TSCL…MPRQ), 643–676 (QSLY…KTDH), 677–710 (IPAH…DPTK), 711–744 (GNCY…DSTE), 745–778 (FDVV…RPNY), and 779–812 (PAAL…KPDD).

The protein belongs to the TMTC family.

Its subcellular location is the membrane. It is found in the endoplasmic reticulum. It carries out the reaction a di-trans,poly-cis-dolichyl beta-D-mannosyl phosphate + L-seryl-[protein] = 3-O-(alpha-D-mannosyl)-L-seryl-[protein] + a di-trans,poly-cis-dolichyl phosphate + H(+). The enzyme catalyses a di-trans,poly-cis-dolichyl beta-D-mannosyl phosphate + L-threonyl-[protein] = 3-O-(alpha-D-mannosyl)-L-threonyl-[protein] + a di-trans,poly-cis-dolichyl phosphate + H(+). It participates in protein modification; protein glycosylation. Transfers mannosyl residues to the hydroxyl group of serine or threonine residues. The 4 members of the TMTC family are O-mannosyl-transferases dedicated primarily to the cadherin superfamily, each member seems to have a distinct role in decorating the cadherin domains with O-linked mannose glycans at specific regions. Also acts as O-mannosyl-transferase on other proteins such as PDIA3. The sequence is that of Protein O-mannosyl-transferase TMTC2 from Homo sapiens (Human).